The chain runs to 198 residues: MGTISASLVKELREKTGAGMMDCKEALTACDGDIEKAVDFLRQKGLAKAAKRSGRETSEGIVESYIHMGGKIGVMVEVNCESDFVAKTDDFKEFARNVAMQIAATNPAGIAPEDVPADLLERERQVYRAQVLEMGKPENMVDKIVDGKIKKFFKESCLIEQQYVKNPDITIGDYLNETVAKIGESIRIKRFARFALGE.

Residues 82 to 85 form an involved in Mg(2+) ion dislocation from EF-Tu region; the sequence is SDFV.

It belongs to the EF-Ts family.

The protein localises to the cytoplasm. In terms of biological role, associates with the EF-Tu.GDP complex and induces the exchange of GDP to GTP. It remains bound to the aminoacyl-tRNA.EF-Tu.GTP complex up to the GTP hydrolysis stage on the ribosome. The sequence is that of Elongation factor Ts from Desulfosudis oleivorans (strain DSM 6200 / JCM 39069 / Hxd3) (Desulfococcus oleovorans).